A 519-amino-acid chain; its full sequence is Cytosol aminopeptidase (519 aa).

Ser-42 is modified (phosphoserine). Residue Lys-45 is modified to N6-succinyllysine. Phosphoserine is present on Ser-54. 2 positions are modified to N6-succinyllysine: Lys-61 and Lys-103. Residues Ser-180 and Ser-194 each carry the phosphoserine modification. Zn(2+) contacts are provided by Leu-202, Met-203, and Thr-205. Lys-221 is subject to N6-acetyllysine; alternate. Lys-221 bears the N6-succinyllysine; alternate mark. Ser-238 bears the Phosphoserine mark. Residues Lys-282 and Asp-287 each coordinate Zn(2+). Substrate-binding residues include Lys-282, Asp-287, Ser-292, and Lys-294. Residue Asp-287 participates in Mg(2+) binding. Lys-294 is an active-site residue. Positions 303, 305, 364, and 366 each coordinate Zn(2+). Residues Asp-305 and Asp-364 each coordinate substrate. 2 residues coordinate Mg(2+): Asp-364 and Glu-366. Arg-368 is an active-site residue. Position 455 is an N6-acetyllysine; alternate (Lys-455). An N6-succinyllysine; alternate modification is found at Lys-455. The residue at position 476 (Lys-476) is an N6-succinyllysine. Lys-489 is subject to N6-acetyllysine; alternate. Lys-489 bears the N6-succinyllysine; alternate mark.

Belongs to the peptidase M17 family. Homohexamer. The cofactor is Zn(2+). Mn(2+) is required as a cofactor.

It localises to the cytoplasm. It carries out the reaction Release of an N-terminal amino acid, Xaa-|-Yaa-, in which Xaa is preferably Leu, but may be other amino acids including Pro although not Arg or Lys, and Yaa may be Pro. Amino acid amides and methyl esters are also readily hydrolyzed, but rates on arylamides are exceedingly low.. The catalysed reaction is an S-substituted L-cysteinylglycine + H2O = an S-substituted L-cysteine + glycine. It catalyses the reaction L-cysteinylglycine + H2O = L-cysteine + glycine. The enzyme catalyses S-benzyl-L-cysteinylglycine + H2O = S-benzyl-L-cysteine + glycine. It carries out the reaction Release of N-terminal proline from a peptide.. In terms of biological role, cytosolic metallopeptidase that catalyzes the removal of unsubstituted N-terminal hydrophobic amino acids from various peptides. The presence of Zn(2+) ions is essential for the peptidase activity, and the association with other cofactors can modulate the substrate spectificity of the enzyme. For instance, in the presence of Mn(2+), it displays a specific Cys-Gly hydrolyzing activity of Cys-Gly-S-conjugates. Involved in the metabolism of glutathione and in the degradation of glutathione S-conjugates, which may play a role in the control of the cell redox status. The chain is Cytosol aminopeptidase from Homo sapiens (Human).